The chain runs to 326 residues: ATP synthase gamma chain (326 aa).

The protein belongs to the ATPase gamma chain family. As to quaternary structure, F-type ATPases have 2 components, CF(1) - the catalytic core - and CF(0) - the membrane proton channel. CF(1) has five subunits: alpha(3), beta(3), gamma(1), delta(1), epsilon(1). CF(0) has three main subunits: a, b and c.

Its subcellular location is the cell membrane. In terms of biological role, produces ATP from ADP in the presence of a proton gradient across the membrane. The gamma chain is believed to be important in regulating ATPase activity and the flow of protons through the CF(0) complex. This Corynebacterium jeikeium (strain K411) protein is ATP synthase gamma chain.